The chain runs to 457 residues: tRNA modification GTPase MnmE (457 aa).

(6S)-5-formyl-5,6,7,8-tetrahydrofolate is bound by residues arginine 25, glutamate 87, and arginine 126. Residues 223 to 377 (GISTAIIGRP…IEERINNLFF (155 aa)) enclose the TrmE-type G domain. Residue asparagine 233 participates in K(+) binding. Residues 233–238 (NVGKSS), 252–258 (TDIAGTT), and 277–280 (DTAG) contribute to the GTP site. Serine 237 lines the Mg(2+) pocket. The K(+) site is built by threonine 252, isoleucine 254, and threonine 257. Threonine 258 provides a ligand contact to Mg(2+). Residue lysine 457 participates in (6S)-5-formyl-5,6,7,8-tetrahydrofolate binding.

This sequence belongs to the TRAFAC class TrmE-Era-EngA-EngB-Septin-like GTPase superfamily. TrmE GTPase family. Homodimer. Heterotetramer of two MnmE and two MnmG subunits. K(+) serves as cofactor.

Its subcellular location is the cytoplasm. Functionally, exhibits a very high intrinsic GTPase hydrolysis rate. Involved in the addition of a carboxymethylaminomethyl (cmnm) group at the wobble position (U34) of certain tRNAs, forming tRNA-cmnm(5)s(2)U34. The polypeptide is tRNA modification GTPase MnmE (Streptococcus pneumoniae serotype 2 (strain D39 / NCTC 7466)).